The chain runs to 366 residues: Tetraacyldisaccharide 4'-kinase (366 aa).

65–72 is a binding site for ATP; it reads TVGGTGKT. The tract at residues 343 to 366 is disordered; that stretch reads AKSTPASGGATGLNKEHQDGQPAA. Basic and acidic residues predominate over residues 356–366; the sequence is NKEHQDGQPAA.

The protein belongs to the LpxK family.

The catalysed reaction is a lipid A disaccharide + ATP = a lipid IVA + ADP + H(+). The protein operates within glycolipid biosynthesis; lipid IV(A) biosynthesis; lipid IV(A) from (3R)-3-hydroxytetradecanoyl-[acyl-carrier-protein] and UDP-N-acetyl-alpha-D-glucosamine: step 6/6. In terms of biological role, transfers the gamma-phosphate of ATP to the 4'-position of a tetraacyldisaccharide 1-phosphate intermediate (termed DS-1-P) to form tetraacyldisaccharide 1,4'-bis-phosphate (lipid IVA). The chain is Tetraacyldisaccharide 4'-kinase from Cupriavidus pinatubonensis (strain JMP 134 / LMG 1197) (Cupriavidus necator (strain JMP 134)).